The chain runs to 396 residues: Elongation factor Tu (396 aa).

One can recognise a tr-type G domain in the interval 10–206 (KPHVNVGTIG…ALDTYIPTPE (197 aa)). Residues 19-26 (GHVDHGKT) form a G1 region. 19-26 (GHVDHGKT) is a binding site for GTP. Residue threonine 26 coordinates Mg(2+). The interval 60–64 (GITIN) is G2. Residues 81-84 (DCPG) are G3. GTP is bound by residues 81-85 (DCPGH) and 136-139 (NKAD). The G4 stretch occupies residues 136–139 (NKAD). Residues 174 to 176 (SAK) form a G5 region.

The protein belongs to the TRAFAC class translation factor GTPase superfamily. Classic translation factor GTPase family. EF-Tu/EF-1A subfamily. In terms of assembly, monomer.

The protein localises to the cytoplasm. It carries out the reaction GTP + H2O = GDP + phosphate + H(+). In terms of biological role, GTP hydrolase that promotes the GTP-dependent binding of aminoacyl-tRNA to the A-site of ribosomes during protein biosynthesis. The sequence is that of Elongation factor Tu from Janthinobacterium sp. (strain Marseille) (Minibacterium massiliensis).